The primary structure comprises 184 residues: Dual specificity protein phosphatase 22 (184 aa).

Gly2 is lipidated: N-myristoyl glycine. Residues 4 to 144 form the Tyrosine-protein phosphatase domain; sequence GMNKILPGLY…LQEFEKHEVH (141 aa). Phosphoserine is present on Ser58. Cys88 (phosphocysteine intermediate) is an active-site residue. Positions 89, 90, 92, 93, and 94 each coordinate a protein.

This sequence belongs to the protein-tyrosine phosphatase family. Non-receptor class dual specificity subfamily. As to quaternary structure, monomer. Interacts with LCK; the interaction is direct. Interacts with UBR2; the interaction is direct. Myristoylation regulates subcellular location, and is necessary for activation of JNK. Ubiquitous. Highest expression seen in heart, placenta, lung, liver, kidney and pancreas.

It localises to the cytoplasm. The catalysed reaction is O-phospho-L-tyrosyl-[protein] + H2O = L-tyrosyl-[protein] + phosphate. The enzyme catalyses O-phospho-L-seryl-[protein] + H2O = L-seryl-[protein] + phosphate. It carries out the reaction O-phospho-L-threonyl-[protein] + H2O = L-threonyl-[protein] + phosphate. Functionally, dual specificity phosphatase; can dephosphorylate both phosphotyrosine and phosphoserine or phosphothreonine residues. Activates the JNK signaling pathway. Inhibits T-cell receptor signaling and T-cell mediated immune responses, acting, at least in part, by inducing degradation of E3 ubiquitin ligase UBR2. Dephosphorylates and thereby induces 'Lys-48'-linked ubiquitination of UBR2, leading to proteasomal degradation of UBR2. Dephosphorylates and thereby inactivates tyrosine kinase LCK. Inhibits UBR2-mediated 'Lys-63'-linked ubiquitination of LCK. May play a role in B-cell receptor (BCR) signaling and B-cell function. In Homo sapiens (Human), this protein is Dual specificity protein phosphatase 22 (DUSP22).